The following is a 220-amino-acid chain: Type-4 uracil-DNA glycosylase (220 aa).

Residues C14 and C17 each contribute to the [4Fe-4S] cluster site. Residues 41–43 (GEA), F55, and N82 each bind uracil. [4Fe-4S] cluster is bound by residues C86 and C102. H164 is a uracil binding site.

This sequence belongs to the uracil-DNA glycosylase (UDG) superfamily. Type 4 (UDGa) family.

It catalyses the reaction Hydrolyzes single-stranded DNA or mismatched double-stranded DNA and polynucleotides, releasing free uracil.. Its function is as follows. Removes uracil bases that are present in DNA as a result of either deamination of cytosine or misincorporation of dUMP instead of dTMP. This Sulfurisphaera tokodaii (strain DSM 16993 / JCM 10545 / NBRC 100140 / 7) (Sulfolobus tokodaii) protein is Type-4 uracil-DNA glycosylase.